The chain runs to 459 residues: MSEQSSVVVIGAGLAGTEAAWQVAKAGVPVTLWEMRPFKRSPAHHSSEFAELVCSNSFGALSSDRAAGLLQEELRRLGSLVIQTADHHSVPAGGALAVDRGRYSAALTSALDDHPLVTIRREEQLTLPDPDQIAVLATGPLTSEALADDLRAFTGREDCHFFDAASPIVEGESIDMTKAFRASRYDKGDADYINCPMDQDQFLAFRAALLDAEQAELKDFDQNSATFFEGCLPIEELARRGEDTMRYGPLKPIGLWDPRWGDVNDRDVRRAKRAYAVVQLRQEDKDGRLWNLVGFQTNLKWGEQKRVLRLIPGLEQADFVRFGVMHRNTFLEAPELLEPTLQFRRRPHLLAAGQITGTEGYAAAVAGGWLAGTNAARLVHGHDPMQLPHTTMIGALTHFISEAPSGKFQPMPPNFGLMPQLQECIREKRARYGAYRDRALADLQRTIDESQVDNVVCTA.

11 to 16 (GAGLAG) contributes to the FAD binding site.

It belongs to the MnmG family. TrmFO subfamily. FAD serves as cofactor.

The protein localises to the cytoplasm. The enzyme catalyses uridine(54) in tRNA + (6R)-5,10-methylene-5,6,7,8-tetrahydrofolate + NADH + H(+) = 5-methyluridine(54) in tRNA + (6S)-5,6,7,8-tetrahydrofolate + NAD(+). It carries out the reaction uridine(54) in tRNA + (6R)-5,10-methylene-5,6,7,8-tetrahydrofolate + NADPH + H(+) = 5-methyluridine(54) in tRNA + (6S)-5,6,7,8-tetrahydrofolate + NADP(+). In terms of biological role, catalyzes the folate-dependent formation of 5-methyl-uridine at position 54 (M-5-U54) in all tRNAs. The chain is Methylenetetrahydrofolate--tRNA-(uracil-5-)-methyltransferase TrmFO from Synechococcus sp. (strain CC9311).